The chain runs to 70 residues: MRGGGKKNGSNVEPLRATRPCAECGRPSVREHYPFCSERCRNVDLNRWLSGSYAIPVADDESKADDGDER.

Cys21, Cys24, Cys36, and Cys40 together coordinate Zn(2+).

The protein belongs to the DNA gyrase inhibitor YacG family. Interacts with GyrB. Zn(2+) serves as cofactor.

In terms of biological role, inhibits all the catalytic activities of DNA gyrase by preventing its interaction with DNA. Acts by binding directly to the C-terminal domain of GyrB, which probably disrupts DNA binding by the gyrase. The protein is DNA gyrase inhibitor YacG of Rhizobium meliloti (strain 1021) (Ensifer meliloti).